Consider the following 204-residue polypeptide: Proteasome subunit beta type-3-A (204 aa).

The protein belongs to the peptidase T1B family. As to quaternary structure, component of the 20S core complex of the 26S proteasome. The 26S proteasome is composed of a core protease (CP), known as the 20S proteasome, capped at one or both ends by the 19S regulatory particle (RP/PA700). The 20S proteasome core is composed of 28 subunits that are arranged in four stacked rings, resulting in a barrel-shaped structure. The two end rings are each formed by seven alpha subunits, and the two central rings are each formed by seven beta subunits. The catalytic chamber with the active sites is on the inside of the barrel.

It is found in the cytoplasm. The protein localises to the nucleus. Its function is as follows. Non-catalytic component of the proteasome, a multicatalytic proteinase complex which is characterized by its ability to cleave peptides with Arg, Phe, Tyr, Leu, and Glu adjacent to the leaving group at neutral or slightly basic pH. The proteasome has an ATP-dependent proteolytic activity. The protein is Proteasome subunit beta type-3-A (PBC1) of Arabidopsis thaliana (Mouse-ear cress).